The primary structure comprises 67 residues: Systemic RNA interference defective protein 5 (67 aa).

The Extracellular segment spans residues 1 to 18 (MPSKNCAKNLHACQWERD). Residues 19 to 39 (IALVFLGLMVLFNIGQVVYMN) traverse the membrane as a helical segment. Residues 40–67 (RARLYRLIRRGAEQIPADDEEPIIGIRD) lie on the Cytoplasmic side of the membrane.

As to expression, ubiquitously present in most tissues tested. Expressed in the somatic cells of intestine, muscle, neurons, somatic gonad and embryos but not in the germline (at protein level).

It is found in the late endosome membrane. Plays a role in RNA-mediated gene silencing by mediating transport of both ingested and endogenous dsRNA between cells. Not required for the uptake of dsRNA from the intestinal lumen. In Caenorhabditis elegans, this protein is Systemic RNA interference defective protein 5.